Consider the following 479-residue polypeptide: MSIVVKNNIHWVGQRDWEVRDFHGTEYKTLRGSSYNSYLIREEKNVLIDTVDHKFSREFVQNLRNEIDLADIDYIVINHAEEDHAGALTELMAQIPDTPIYCTANAIDSINGHHHHPEWNFNVVKTGDTLDIGNGKQLIFVETPMLHWPDSMMTYLTGDAVLFSNDAFGQHYCDEHLFNDEVDQTELFEQCQRYYANILTPFSRLVTPKITEILGFNLPVDMIATSHGVVWRDNPTQIVELYLKWAADYQEDRITIFYDTMSNNTRMMADAIAQGIAETDPRVAVKIFNVARSDKNEILTNVFRSKGVLVGTSTMNNVMMPKIAGLVEEMTGLRFRNKRASAFGSHGWSGGAVDRLSTRLQDAGFEMSLSLKAKWRPDQDALELCREHGREIARQWALAPLPQSTVNTVVKEETSAATTADLGPRMQCSVCQWIYDPAKGEPMQDVAPGTPWSEVPDNFLCPECSLGKDVFDELASEAK.

A zinc metallo-hydrolase region spans residues 30–210 (LRGSSYNSYL…PFSRLVTPKI (181 aa)). Residues histidine 79, glutamate 81, aspartate 83, histidine 147, aspartate 166, and histidine 227 each coordinate Fe cation. The Flavodoxin-like domain occupies 254–393 (ITIFYDTMSN…LCREHGREIA (140 aa)). FMN-binding positions include 260-264 (TMSNN) and 342-369 (AFGS…EMSL). Positions 423–474 (GPRMQCSVCQWIYDPAKGEPMQDVAPGTPWSEVPDNFLCPECSLGKDVFDEL) constitute a Rubredoxin-like domain. Residues cysteine 428, cysteine 431, cysteine 461, and cysteine 464 each contribute to the Fe cation site.

The protein in the N-terminal section; belongs to the zinc metallo-hydrolase group 3 family. In terms of assembly, homotetramer. The cofactor is Fe cation. It depends on FMN as a cofactor.

The protein resides in the cytoplasm. Its pathway is nitrogen metabolism; nitric oxide reduction. In terms of biological role, anaerobic nitric oxide reductase; uses NADH to detoxify nitric oxide (NO), protecting several 4Fe-4S NO-sensitive enzymes. Has at least 2 reductase partners, only one of which (NorW, flavorubredoxin reductase) has been identified. NO probably binds to the di-iron center; electrons enter from the NorW at rubredoxin and are transferred sequentially to the FMN center and the di-iron center. Also able to function as an aerobic oxygen reductase. This Escherichia coli O6:H1 (strain CFT073 / ATCC 700928 / UPEC) protein is Anaerobic nitric oxide reductase flavorubredoxin.